The primary structure comprises 271 residues: Phosphatidylglycerol--prolipoprotein diacylglyceryl transferase (271 aa).

Transmembrane regions (helical) follow at residues 21-41, 60-80, 95-115, 124-144, 176-196, 203-223, and 230-250; these read ISVRWYGLMYLFGFLFAMWLA, LLFAGFLGVVLGGRIGYVLFY, VWTGGMSFHGGLLGVITAMLW, FFGVADFVAPLVPFGLGVGRL, SQLYEMALEGVLLFFILNWFI, GSVSGLFLAGYGTFRFLVEYV, and LGLFGGFISMGQILSSPMIIG. Arg-143 is a binding site for a 1,2-diacyl-sn-glycero-3-phospho-(1'-sn-glycerol).

Belongs to the Lgt family.

It is found in the cell inner membrane. The catalysed reaction is L-cysteinyl-[prolipoprotein] + a 1,2-diacyl-sn-glycero-3-phospho-(1'-sn-glycerol) = an S-1,2-diacyl-sn-glyceryl-L-cysteinyl-[prolipoprotein] + sn-glycerol 1-phosphate + H(+). It participates in protein modification; lipoprotein biosynthesis (diacylglyceryl transfer). In terms of biological role, catalyzes the transfer of the diacylglyceryl group from phosphatidylglycerol to the sulfhydryl group of the N-terminal cysteine of a prolipoprotein, the first step in the formation of mature lipoproteins. In Vibrio vulnificus (strain YJ016), this protein is Phosphatidylglycerol--prolipoprotein diacylglyceryl transferase.